The following is a 533-amino-acid chain: Lysine--tRNA ligase 1 (533 aa).

A 'HIGH' region motif is present at residues 26–34; it reads PSGHIHIGN. The 'KMSKS' region motif lies at 272-276; the sequence is AMSSS.

The protein belongs to the class-I aminoacyl-tRNA synthetase family.

It localises to the cytoplasm. It catalyses the reaction tRNA(Lys) + L-lysine + ATP = L-lysyl-tRNA(Lys) + AMP + diphosphate. In Methanosarcina acetivorans (strain ATCC 35395 / DSM 2834 / JCM 12185 / C2A), this protein is Lysine--tRNA ligase 1.